The primary structure comprises 424 residues: GTPase Obg (424 aa).

The Obg domain maps to 1 to 160 (MFDRVEINIK…YDLILELKLI (160 aa)). In terms of domain architecture, OBG-type G spans 161-328 (ADVAIIGYPN…LLAKVAEKLD (168 aa)). GTP contacts are provided by residues 167-174 (GYPNVGKS), 192-196 (FTTLS), 213-216 (EVPG), 280-283 (NKID), and 309-311 (SAL). Serine 174 and threonine 194 together coordinate Mg(2+). The 76-residue stretch at 349–424 (PAPKGKMGFR…IITGRMEWYL (76 aa)) folds into the OCT domain.

Belongs to the TRAFAC class OBG-HflX-like GTPase superfamily. OBG GTPase family. As to quaternary structure, monomer. It depends on Mg(2+) as a cofactor.

The protein localises to the cytoplasm. Functionally, an essential GTPase which binds GTP, GDP and possibly (p)ppGpp with moderate affinity, with high nucleotide exchange rates and a fairly low GTP hydrolysis rate. Plays a role in control of the cell cycle, stress response, ribosome biogenesis and in those bacteria that undergo differentiation, in morphogenesis control. This chain is GTPase Obg, found in Dehalococcoides mccartyi (strain ATCC BAA-2100 / JCM 16839 / KCTC 5957 / BAV1).